A 1330-amino-acid polypeptide reads, in one-letter code: DNA-directed RNA polymerase subunit beta'' (1330 aa).

Zn(2+)-binding residues include cysteine 214, cysteine 282, cysteine 289, and cysteine 292.

The protein belongs to the RNA polymerase beta' chain family. RpoC2 subfamily. In terms of assembly, in plastids the minimal PEP RNA polymerase catalytic core is composed of four subunits: alpha, beta, beta', and beta''. When a (nuclear-encoded) sigma factor is associated with the core the holoenzyme is formed, which can initiate transcription. Zn(2+) is required as a cofactor.

It localises to the plastid. The protein localises to the chloroplast. The catalysed reaction is RNA(n) + a ribonucleoside 5'-triphosphate = RNA(n+1) + diphosphate. Its function is as follows. DNA-dependent RNA polymerase catalyzes the transcription of DNA into RNA using the four ribonucleoside triphosphates as substrates. The polypeptide is DNA-directed RNA polymerase subunit beta'' (Physcomitrium patens (Spreading-leaved earth moss)).